A 474-amino-acid chain; its full sequence is tRNA-2-methylthio-N(6)-dimethylallyladenosine synthase (474 aa).

The 118-residue stretch at 3–120 (KKLHIKTWGC…LPDMIEQVRR (118 aa)) folds into the MTTase N-terminal domain. The [4Fe-4S] cluster site is built by Cys12, Cys49, Cys83, Cys157, Cys161, and Cys164. Positions 143–375 (RAEGPTAFVS…QDRITQQAMR (233 aa)) constitute a Radical SAM core domain. The region spanning 378 to 441 (RHMMGTVQRI…TNSLRGKFIR (64 aa)) is the TRAM domain.

Belongs to the methylthiotransferase family. MiaB subfamily. As to quaternary structure, monomer. [4Fe-4S] cluster serves as cofactor.

It localises to the cytoplasm. It carries out the reaction N(6)-dimethylallyladenosine(37) in tRNA + (sulfur carrier)-SH + AH2 + 2 S-adenosyl-L-methionine = 2-methylsulfanyl-N(6)-dimethylallyladenosine(37) in tRNA + (sulfur carrier)-H + 5'-deoxyadenosine + L-methionine + A + S-adenosyl-L-homocysteine + 2 H(+). Functionally, catalyzes the methylthiolation of N6-(dimethylallyl)adenosine (i(6)A), leading to the formation of 2-methylthio-N6-(dimethylallyl)adenosine (ms(2)i(6)A) at position 37 in tRNAs that read codons beginning with uridine. The sequence is that of tRNA-2-methylthio-N(6)-dimethylallyladenosine synthase from Shewanella putrefaciens (strain CN-32 / ATCC BAA-453).